The chain runs to 320 residues: Acetaldehyde dehydrogenase 2 (320 aa).

Cysteine 129 functions as the Acyl-thioester intermediate in the catalytic mechanism. NAD(+)-binding positions include 160 to 168 (SAGPGTRAN) and asparagine 287.

The protein belongs to the acetaldehyde dehydrogenase family.

It catalyses the reaction acetaldehyde + NAD(+) + CoA = acetyl-CoA + NADH + H(+). The protein is Acetaldehyde dehydrogenase 2 of Burkholderia cenocepacia (strain ATCC BAA-245 / DSM 16553 / LMG 16656 / NCTC 13227 / J2315 / CF5610) (Burkholderia cepacia (strain J2315)).